The chain runs to 145 residues: uncharacterized protein (145 aa).

This is an uncharacterized protein from Frog virus 3 (isolate Goorha) (FV-3).